A 384-amino-acid chain; its full sequence is Dual-specificity RNA methyltransferase RlmN (384 aa).

Glu-105 (proton acceptor) is an active-site residue. In terms of domain architecture, Radical SAM core spans 111–350 (EDDRATLCVS…TIVRKTRGDD (240 aa)). Cys-118 and Cys-355 form a disulfide bridge. [4Fe-4S] cluster is bound by residues Cys-125, Cys-129, and Cys-132. S-adenosyl-L-methionine contacts are provided by residues 179–180 (GE), Ser-211, 233–235 (SLH), and Asn-312. Cys-355 serves as the catalytic S-methylcysteine intermediate.

It belongs to the radical SAM superfamily. RlmN family. Requires [4Fe-4S] cluster as cofactor.

Its subcellular location is the cytoplasm. The catalysed reaction is adenosine(2503) in 23S rRNA + 2 reduced [2Fe-2S]-[ferredoxin] + 2 S-adenosyl-L-methionine = 2-methyladenosine(2503) in 23S rRNA + 5'-deoxyadenosine + L-methionine + 2 oxidized [2Fe-2S]-[ferredoxin] + S-adenosyl-L-homocysteine. It carries out the reaction adenosine(37) in tRNA + 2 reduced [2Fe-2S]-[ferredoxin] + 2 S-adenosyl-L-methionine = 2-methyladenosine(37) in tRNA + 5'-deoxyadenosine + L-methionine + 2 oxidized [2Fe-2S]-[ferredoxin] + S-adenosyl-L-homocysteine. Its function is as follows. Specifically methylates position 2 of adenine 2503 in 23S rRNA and position 2 of adenine 37 in tRNAs. m2A2503 modification seems to play a crucial role in the proofreading step occurring at the peptidyl transferase center and thus would serve to optimize ribosomal fidelity. The polypeptide is Dual-specificity RNA methyltransferase RlmN (Escherichia fergusonii (strain ATCC 35469 / DSM 13698 / CCUG 18766 / IAM 14443 / JCM 21226 / LMG 7866 / NBRC 102419 / NCTC 12128 / CDC 0568-73)).